The primary structure comprises 1303 residues: MKEKYLFIPPKPKFTNKTIDKKELKKLMAWAFSNYGTGRASYLADKIKDLGFQYATKAGLSLSVEDLRVPPTKRELLKRTNEEINLTQQKYERGEITTVERFQKVIDTWNNASEELKDEVVKYFKETDPLNTIYIMAFSGARGNISQVRQLVGMRGLMADPQGQIIDLPIKSNFREGLTVTDYIISSYGARKGLVDTALRTADSGYLTRRLVDVAQDIIIREIDCDTDRGILLKDMVSNNQILIPLQNRLLGRVLFETLHSPDSANVIAHINQDLDHNTAEFIVKSGIKSVIVRSPLTCESSRSVCQFCYGWNLAHGSLVDLGEAVGIIAAQSIGEPGTQLTMRTFHTGGVFTGELAEQIRAPFDGVLRIPKSFRTRLIRTRHGEEAFVLEDSYKLDLYDSSYKKHKIEFKQGTILFLNDNEQFKKSQVIGELSTKSSMITERVTKDLNTENSGEVCFSNLYIEEKIDRQGNSITNTPKGGCLWILSGEVYNLPSYADIKIKEKQFVEEDEVLATSKVISDYGGLVRLNQSNQTSNITELQIVTSSVSLDNATIVTDDQKSTNSDPSYTLEMECGIKFHMLCSPGNKIVNSQIIAELIDTKYQTSTGGIVKYDGFEVNKKNKNKKGYEILGEGALLWIPEETHEINKDISLLLVEEGQCITAGTQIVKELYSLTEGYIQIIQENEIVKEVIVKPGKEHVRSTTSNNLNEYPKIVKPNDPDYAEYNAQGTIYIEELHYKKGNALLIRPVIEFRIDNEKIDLKTNYLTNENHHITIKPTKRVLFKDGQRVKSKYGVDLLKTYLIMSVDFDKPHLSADVEFVPAHEDDIYKLHLTVLETLQIKQDDFGESKKKSTITSLCVKQNELIKAGSTVAETHLLAHSAGFVQSINQTSQSTCKVLILTNSDEKSIDIYNQTPQVSQGDFIRSGDQIANGIIAETSGQIVEIETNKIKIRSGTPYLVSSNAILQVKNGNLVETGDTLAILVFERSKTGDIVQGLPRIEEILEARKPKEPSKLSQRPGKITLNYDSEDNKCIRILSSNGEYNEYIMSGIQKIIVSNGENILLAEPITDGAPNPHEMLGLFFNFYKERMPLYEAAKLALQKVQIYLVNEVQNVYQSQNVDISDKHIEVIVRQMTSKVKVEDGGDTTLLPGELVELQQIENINEAMTLTKGLPARYSPVLLGITKSSLNTDSFISAASFQETTRVLTEAAIEGKADWLRGLKENVIIGRLIPAGTGFNSYNDISKSFVLEKKNQMPDSYEQNQNEEQNIEDIILDDNIARNYALIENPINNFDTIEQNINQSKDI.

Cysteine 225, cysteine 299, cysteine 306, and cysteine 309 together coordinate Zn(2+).

The protein belongs to the RNA polymerase beta' chain family. RpoC2 subfamily. As to quaternary structure, in plastids the minimal PEP RNA polymerase catalytic core is composed of four subunits: alpha, beta, beta', and beta''. When a (nuclear-encoded) sigma factor is associated with the core the holoenzyme is formed, which can initiate transcription. The cofactor is Zn(2+).

It localises to the plastid. It is found in the chloroplast. The enzyme catalyses RNA(n) + a ribonucleoside 5'-triphosphate = RNA(n+1) + diphosphate. In terms of biological role, DNA-dependent RNA polymerase catalyzes the transcription of DNA into RNA using the four ribonucleoside triphosphates as substrates. The chain is DNA-directed RNA polymerase subunit beta'' from Rhodomonas salina (Cryptomonas salina).